The following is an 833-amino-acid chain: AdoMet-dependent rRNA methyltransferase SPB1 (833 aa).

Positions 59, 61, 79, 95, and 120 each coordinate S-adenosyl-L-methionine. The Proton acceptor role is filled by lysine 160. Coiled coils occupy residues 348–389 (EEEQ…QLNM) and 453–481 (RDEL…SERD). A compositionally biased stretch (basic and acidic residues) spans 477-493 (KSERDAKFRAKQARESS). Disordered regions lie at residues 477 to 532 (KSER…SDDD), 592 to 645 (KRKL…EKHS), and 776 to 810 (VTKK…GKYK). Composition is skewed to acidic residues over residues 505–532 (QSDE…SDDD) and 622–634 (EDGD…DSEE). Over residues 635–645 (EAKRTKQEKHS) the composition is skewed to basic and acidic residues. Residues 730-782 (AEAKARKKHRAVARLEKLKKKAGLINDDSDKSEKDKAEEIAKLMRKVTKKAKQ) are a coiled coil.

Belongs to the class I-like SAM-binding methyltransferase superfamily. RNA methyltransferase RlmE family. SPB1 subfamily. As to quaternary structure, component of the nucleolar and nucleoplasmic pre-60S ribosomal particle.

It is found in the nucleus. The protein resides in the nucleolus. It carries out the reaction a ribonucleotide in rRNA + S-adenosyl-L-methionine = a 2'-O-methylribonucleotide in rRNA + S-adenosyl-L-homocysteine + H(+). In terms of biological role, required for proper assembly of pre-ribosomal particles during the biogenesis of the 60S ribosomal subunit. The protein is AdoMet-dependent rRNA methyltransferase SPB1 of Kluyveromyces lactis (strain ATCC 8585 / CBS 2359 / DSM 70799 / NBRC 1267 / NRRL Y-1140 / WM37) (Yeast).